The sequence spans 345 residues: GTP 3',8-cyclase (345 aa).

The Radical SAM core domain maps to 10–236 (SHGRPLGVLR…QCVSSHWPLD (227 aa)). R19 contacts GTP. Positions 26 and 30 each coordinate [4Fe-4S] cluster. Y32 is an S-adenosyl-L-methionine binding site. Residue C33 participates in [4Fe-4S] cluster binding. Residue R65 coordinates GTP. G69 lines the S-adenosyl-L-methionine pocket. T98 is a GTP binding site. S123 contacts S-adenosyl-L-methionine. K172 is a binding site for GTP. Position 206 (M206) interacts with S-adenosyl-L-methionine. Residues C269 and C272 each coordinate [4Fe-4S] cluster. Residue 274–276 (RIR) participates in GTP binding. Residue C286 participates in [4Fe-4S] cluster binding.

Belongs to the radical SAM superfamily. MoaA family. In terms of assembly, monomer and homodimer. The cofactor is [4Fe-4S] cluster.

It catalyses the reaction GTP + AH2 + S-adenosyl-L-methionine = (8S)-3',8-cyclo-7,8-dihydroguanosine 5'-triphosphate + 5'-deoxyadenosine + L-methionine + A + H(+). It participates in cofactor biosynthesis; molybdopterin biosynthesis. Functionally, catalyzes the cyclization of GTP to (8S)-3',8-cyclo-7,8-dihydroguanosine 5'-triphosphate. The chain is GTP 3',8-cyclase from Synechococcus sp. (strain CC9902).